We begin with the raw amino-acid sequence, 411 residues long: Z-DNA-binding protein 1 (411 aa).

Z-binding domains lie at Leu8–Gly70 and Ser84–Gln148. Residues Lys17 and Lys43 each participate in a glycyl lysine isopeptide (Lys-Gly) (interchain with G-Cter in ubiquitin) cross-link. Positions Ser60–Ala86 are disordered. 2 short sequence motifs (RIP homotypic interaction motif (RHIM)) span residues Asn188–Ala205 and Tyr237–Asp261. Disordered regions lie at residues Gly263–Thr303 and Lys332–Gln411. Polar residues-rich tracts occupy residues Tyr268 to Thr292, Gly350 to Pro371, and Ile400 to Gln411.

Homodimer. Interacts (via RIP homotypic interaction motif) with RIPK3; leading to RIPK3 activation and necroptosis; interaction is enhanced by CASP6. Interacts (via RIP homotypic interaction motif) with RIPK1. Component of the AIM2 PANoptosome complex, a multiprotein complex that drives inflammatory cell death (PANoptosis). As to quaternary structure, (Microbial infection) Interacts (via RIP homotypic interaction motif) with murid herpesvirus protein RIR1 (via RIP homotypic interaction motif); leading to inhibition of ZBP1-dependent necroptosis. In terms of assembly, (Microbial infection) Interacts with vaccinia virus E3 protein; leading to inhibit ZBP1-dependent necroptosis. In terms of processing, ubiquitinated; polyubiquitinated following influenza A virus (IAV) infection. Post-translationally, phosphorylated. As to expression, expressed in lung, spleen and liver. Lower levels were seen in heart, kidney and testis. Expression is greatly up-regulated in tumor stromal cells and activated macrophages.

It localises to the cytoplasm. The protein localises to the nucleus. With respect to regulation, ZBP1-dependent necroptosis is normally inhibited by RIPK1: RIPK1 inhibits the ZBP1-induced activation of RIPK3 via FADD-mediated recruitment of CASP8, which cleaves RIPK1 and limits TNF-induced necroptosis. Functionally, key innate sensor that recognizes and binds Z-RNA structures, which are produced by a number of viruses, such as herpesvirus, orthomyxovirus or flavivirus, and triggers different forms of cell death. ZBP1 acts as an essential mediator of pyroptosis, necroptosis and apoptosis (PANoptosis), an integral part of host defense against pathogens, by activating RIPK3, caspase-8 (CASP8), and the NLRP3 inflammasome. Key activator of necroptosis, a programmed cell death process in response to death-inducing TNF-alpha family members, via its ability to bind Z-RNA: once activated upon Z-RNA-binding, ZBP1 interacts and stimulates RIPK3 kinase, which phosphorylates and activates MLKL, triggering execution of programmed necrosis. In addition to TNF-induced necroptosis, necroptosis can also take place in the nucleus in response to orthomyxoviruses infection: ZBP1 recognizes and binds Z-RNA structures that are produced in infected nuclei by orthomyxoviruses, such as the influenza A virus (IAV), leading to ZBP1 activation, RIPK3 stimulation and subsequent MLKL phosphorylation, triggering disruption of the nuclear envelope and leakage of cellular DNA into the cytosol. ZBP1-dependent cell death in response to IAV infection promotes interleukin-1 alpha (IL1A) induction in an NLRP3-inflammasome-independent manner: IL1A expression is required for the optimal interleukin-1 beta (IL1B) production, and together, these cytokines promote infiltration of inflammatory neutrophils to the lung, leading to the formation of neutrophil extracellular traps. In addition to its direct role in driving necroptosis via its ability to sense Z-RNAs, also involved in PANoptosis triggered in response to bacterial infection: component of the AIM2 PANoptosome complex, a multiprotein complex that triggers PANoptosis. Also acts as the apical sensor of fungal infection responsible for activating PANoptosis. Involved in CASP8-mediated cell death via its interaction with RIPK1 but independently of its ability to sense Z-RNAs. In some cell types, also able to restrict viral replication by promoting cell death-independent responses. In response to flavivirus infection in neurons, promotes a cell death-independent pathway that restricts viral replication: together with RIPK3, promotes a death-independent transcriptional program that modifies the cellular metabolism via up-regulation expression of the enzyme ACOD1/IRG1 and production of the metabolite itaconate. Itaconate inhibits the activity of succinate dehydrogenase, generating a metabolic state in neurons that suppresses replication of viral genomes. The chain is Z-DNA-binding protein 1 from Mus musculus (Mouse).